We begin with the raw amino-acid sequence, 488 residues long: Probable glycine dehydrogenase (decarboxylating) subunit 2 (488 aa).

Lys-274 is modified (N6-(pyridoxal phosphate)lysine).

This sequence belongs to the GcvP family. C-terminal subunit subfamily. As to quaternary structure, the glycine cleavage system is composed of four proteins: P, T, L and H. In this organism, the P 'protein' is a heterodimer of two subunits. Pyridoxal 5'-phosphate serves as cofactor.

It catalyses the reaction N(6)-[(R)-lipoyl]-L-lysyl-[glycine-cleavage complex H protein] + glycine + H(+) = N(6)-[(R)-S(8)-aminomethyldihydrolipoyl]-L-lysyl-[glycine-cleavage complex H protein] + CO2. Its function is as follows. The glycine cleavage system catalyzes the degradation of glycine. The P protein binds the alpha-amino group of glycine through its pyridoxal phosphate cofactor; CO(2) is released and the remaining methylamine moiety is then transferred to the lipoamide cofactor of the H protein. The polypeptide is Probable glycine dehydrogenase (decarboxylating) subunit 2 (Listeria innocua serovar 6a (strain ATCC BAA-680 / CLIP 11262)).